Here is a 572-residue protein sequence, read N- to C-terminus: 2-succinyl-5-enolpyruvyl-6-hydroxy-3-cyclohexene-1-carboxylate synthase (572 aa).

It belongs to the TPP enzyme family. MenD subfamily. In terms of assembly, homodimer. Requires Mg(2+) as cofactor. Mn(2+) is required as a cofactor. It depends on thiamine diphosphate as a cofactor.

It catalyses the reaction isochorismate + 2-oxoglutarate + H(+) = 5-enolpyruvoyl-6-hydroxy-2-succinyl-cyclohex-3-ene-1-carboxylate + CO2. It participates in quinol/quinone metabolism; 1,4-dihydroxy-2-naphthoate biosynthesis; 1,4-dihydroxy-2-naphthoate from chorismate: step 2/7. Its pathway is quinol/quinone metabolism; menaquinone biosynthesis. Catalyzes the thiamine diphosphate-dependent decarboxylation of 2-oxoglutarate and the subsequent addition of the resulting succinic semialdehyde-thiamine pyrophosphate anion to isochorismate to yield 2-succinyl-5-enolpyruvyl-6-hydroxy-3-cyclohexene-1-carboxylate (SEPHCHC). This Vibrio campbellii (strain ATCC BAA-1116) protein is 2-succinyl-5-enolpyruvyl-6-hydroxy-3-cyclohexene-1-carboxylate synthase.